Consider the following 412-residue polypeptide: LL-diaminopimelate aminotransferase (412 aa).

Positions 15 and 42 each coordinate substrate. Pyridoxal 5'-phosphate is bound by residues Tyr-72, 108 to 109 (SK), Tyr-132, Asn-187, Tyr-218, and 246 to 248 (SFS). 3 residues coordinate substrate: Lys-109, Tyr-132, and Asn-187. Lys-249 carries the post-translational modification N6-(pyridoxal phosphate)lysine. Pyridoxal 5'-phosphate is bound by residues Arg-257 and Asn-292. 2 residues coordinate substrate: Asn-292 and Arg-388.

The protein belongs to the class-I pyridoxal-phosphate-dependent aminotransferase family. LL-diaminopimelate aminotransferase subfamily. Homodimer. Requires pyridoxal 5'-phosphate as cofactor.

The enzyme catalyses (2S,6S)-2,6-diaminopimelate + 2-oxoglutarate = (S)-2,3,4,5-tetrahydrodipicolinate + L-glutamate + H2O + H(+). It functions in the pathway amino-acid biosynthesis; L-lysine biosynthesis via DAP pathway; LL-2,6-diaminopimelate from (S)-tetrahydrodipicolinate (aminotransferase route): step 1/1. Its function is as follows. Involved in the synthesis of meso-diaminopimelate (m-DAP or DL-DAP), required for both lysine and peptidoglycan biosynthesis. Catalyzes the direct conversion of tetrahydrodipicolinate to LL-diaminopimelate. This Synechocystis sp. (strain ATCC 27184 / PCC 6803 / Kazusa) protein is LL-diaminopimelate aminotransferase.